The sequence spans 334 residues: snRNA-activating protein complex subunit 2 (334 aa).

2 disordered regions span residues 137–200 and 271–306; these read LHSK…STEE and AGGS…ELKS. Residues 167-180 are compositionally biased toward low complexity; that stretch reads IPSSAPAAPSSAPR.

As to quaternary structure, part of the SNAPc complex composed of 5 subunits: SNAPC1, SNAPC2, SNAPC3, SNAPC4 and SNAPC5. SNAPC2 interacts with TBP and SNAPC4.

It is found in the nucleus. In terms of biological role, part of the SNAPc complex required for the transcription of both RNA polymerase II and III small-nuclear RNA genes. Binds to the proximal sequence element (PSE), a non-TATA-box basal promoter element common to these 2 types of genes. Recruits TBP and BRF2 to the U6 snRNA TATA box. The chain is snRNA-activating protein complex subunit 2 (SNAPC2) from Homo sapiens (Human).